Reading from the N-terminus, the 158-residue chain is Ribosome maturation factor RimP (158 aa).

The protein belongs to the RimP family.

Its subcellular location is the cytoplasm. Its function is as follows. Required for maturation of 30S ribosomal subunits. This is Ribosome maturation factor RimP from Aquifex aeolicus (strain VF5).